A 293-amino-acid chain; its full sequence is Ribosomal protein L11 methyltransferase (293 aa).

Thr-145, Gly-166, Asp-188, and Asn-230 together coordinate S-adenosyl-L-methionine.

This sequence belongs to the methyltransferase superfamily. PrmA family.

The protein localises to the cytoplasm. The enzyme catalyses L-lysyl-[protein] + 3 S-adenosyl-L-methionine = N(6),N(6),N(6)-trimethyl-L-lysyl-[protein] + 3 S-adenosyl-L-homocysteine + 3 H(+). In terms of biological role, methylates ribosomal protein L11. The polypeptide is Ribosomal protein L11 methyltransferase (Shewanella baltica (strain OS223)).